We begin with the raw amino-acid sequence, 526 residues long: Probable 1,4-alpha-glucan branching enzyme MT3115 (526 aa).

Glutamate 205 functions as the Nucleophile in the catalytic mechanism. Arginine 251 and glycine 268 together coordinate substrate. Residue aspartate 344 is the Proton donor of the active site. Residues tryptophan 396 and aspartate 462 each contribute to the substrate site.

Belongs to the glycosyl hydrolase 57 family.

The catalysed reaction is Transfers a segment of a (1-&gt;4)-alpha-D-glucan chain to a primary hydroxy group in a similar glucan chain.. Functionally, catalyzes the formation of branch points in alpha-glucans by cleavage of an alpha-1,4 glycosidic bond and subsequent transfer of the cleaved-off oligosaccharide to a new alpha-1,6 position. Is probably involved in the biosynthesis of 6-O-methylglucosyl lipopolysaccharides (MGLP). The protein is Probable 1,4-alpha-glucan branching enzyme MT3115 of Mycobacterium tuberculosis (strain CDC 1551 / Oshkosh).